The following is a 139-amino-acid chain: MAQAAKKQNLGMGRRKTSSARVFLRSGTGQIIINGLPLDEYFGRETARMVVRQPLVKLDVQSRFDVYATVQGGGDSGQAGAIRHGITRALIQYDEEGGEGGTWRSTLRKAGFVTRDPRMVERKKVGLHGARRGTQFSKR.

It belongs to the universal ribosomal protein uS9 family.

The polypeptide is Small ribosomal subunit protein uS9 (Coxiella burnetii (strain CbuK_Q154) (Coxiella burnetii (strain Q154))).